A 78-amino-acid polypeptide reads, in one-letter code: Protein SlyX homolog (78 aa).

This sequence belongs to the SlyX family.

The chain is Protein SlyX homolog from Xanthomonas oryzae pv. oryzae (strain MAFF 311018).